The chain runs to 51 residues: FANQHLCGSHLVEALYLVCGERGFFYTPKAGIVEQCCASVCSLYQLENYCN.

3 disulfide bridges follow: Cys-7–Cys-37, Cys-19–Cys-50, and Cys-36–Cys-41.

This sequence belongs to the insulin family. In terms of assembly, heterodimer of a B chain and an A chain linked by two disulfide bonds.

The protein localises to the secreted. Insulin decreases blood glucose concentration. It increases cell permeability to monosaccharides, amino acids and fatty acids. It accelerates glycolysis, the pentose phosphate cycle, and glycogen synthesis in liver. In Camelus dromedarius (Dromedary), this protein is Insulin (INS).